We begin with the raw amino-acid sequence, 360 residues long: Thiol protease SEN102 (360 aa).

Positions 1–20 (MAKPKFIALALVALSFLSIA) are cleaved as a signal peptide. Positions 21–133 (QSIPFTEKDL…ENVGSLPAAS (113 aa)) are cleaved as a propeptide — activation peptide. 3 disulfide bridges follow: Cys-151–Cys-193, Cys-185–Cys-225, and Cys-283–Cys-335. Cys-154 is an active-site residue. Residues His-289 and Asn-310 contribute to the active site. Asn-353 is a glycosylation site (N-linked (GlcNAc...) asparagine). Residues 357–360 (RDEL) carry the Prevents secretion from ER motif.

The protein belongs to the peptidase C1 family.

It is found in the endoplasmic reticulum lumen. The chain is Thiol protease SEN102 (SEN102) from Hemerocallis sp. (Daylily).